The chain runs to 128 residues: 3-aminoacrylate deaminase RutC (128 aa).

Belongs to the RutC family. As to quaternary structure, homotrimer.

The enzyme catalyses (Z)-3-aminoacrylate + H2O + H(+) = 3-oxopropanoate + NH4(+). In terms of biological role, involved in pyrimidine catabolism. Catalyzes the deamination of 3-aminoacrylate to malonic semialdehyde, a reaction that can also occur spontaneously. RutC may facilitate the reaction and modulate the metabolic fitness, rather than catalyzing essential functions. The polypeptide is 3-aminoacrylate deaminase RutC (Shigella flexneri serotype X (strain 2002017)).